Here is a 45-residue protein sequence, read N- to C-terminus: Large ribosomal subunit protein bL34 (45 aa).

Belongs to the bacterial ribosomal protein bL34 family.

The polypeptide is Large ribosomal subunit protein bL34 (Salinispora arenicola (strain CNS-205)).